Consider the following 218-residue polypeptide: Recombination protein RecR (218 aa).

Residues 56 to 71 (CRICCNISREEVCRIC) form a C4-type zinc finger. The 117-residue stretch at 79 to 195 (STICVVEEPK…VVSRLASGMP (117 aa)) folds into the Toprim domain.

The protein belongs to the RecR family.

In terms of biological role, may play a role in DNA repair. It seems to be involved in an RecBC-independent recombinational process of DNA repair. It may act with RecF and RecO. The chain is Recombination protein RecR from Corynebacterium diphtheriae (strain ATCC 700971 / NCTC 13129 / Biotype gravis).